The chain runs to 544 residues: Probable protein kinase UbiB (544 aa).

Positions 123–501 constitute a Protein kinase domain; that stretch reads DFDLVPLASA…KRQQATGKFL (379 aa). ATP contacts are provided by residues 129–137 and K152; that span reads LASASIAQV. D287 serves as the catalytic Proton acceptor. Helical transmembrane passes span 496–516 and 519–539; these read ATGK…AILV and TYEQ…LFSW.

This sequence belongs to the ABC1 family. UbiB subfamily.

It localises to the cell inner membrane. Its pathway is cofactor biosynthesis; ubiquinone biosynthesis [regulation]. Its function is as follows. Is probably a protein kinase regulator of UbiI activity which is involved in aerobic coenzyme Q (ubiquinone) biosynthesis. The polypeptide is Probable protein kinase UbiB (Vibrio vulnificus (strain CMCP6)).